The chain runs to 125 residues: Holo-[acyl-carrier-protein] synthase (125 aa).

D8 and E57 together coordinate Mg(2+).

It belongs to the P-Pant transferase superfamily. AcpS family. Mg(2+) serves as cofactor.

The protein localises to the cytoplasm. The catalysed reaction is apo-[ACP] + CoA = holo-[ACP] + adenosine 3',5'-bisphosphate + H(+). Its function is as follows. Transfers the 4'-phosphopantetheine moiety from coenzyme A to a Ser of acyl-carrier-protein. This chain is Holo-[acyl-carrier-protein] synthase, found in Blochmanniella pennsylvanica (strain BPEN).